The chain runs to 156 residues: Aspartate carbamoyltransferase regulatory chain (156 aa).

4 residues coordinate Zn(2+): C110, C115, C140, and C143.

The protein belongs to the PyrI family. Contains catalytic and regulatory chains. Zn(2+) is required as a cofactor.

Involved in allosteric regulation of aspartate carbamoyltransferase. This is Aspartate carbamoyltransferase regulatory chain from Methanocella arvoryzae (strain DSM 22066 / NBRC 105507 / MRE50).